The chain runs to 127 residues: Small ribosomal subunit protein bS6 (127 aa).

Residues 106–117 show a composition bias toward basic and acidic residues; that stretch reads ERKAQSEKKEAE. The disordered stretch occupies residues 106–127; it reads ERKAQSEKKEAEVSEGEGGTEA. Positions 118–127 are enriched in acidic residues; it reads VSEGEGGTEA.

Belongs to the bacterial ribosomal protein bS6 family.

Its function is as follows. Binds together with bS18 to 16S ribosomal RNA. In Thermotoga neapolitana (strain ATCC 49049 / DSM 4359 / NBRC 107923 / NS-E), this protein is Small ribosomal subunit protein bS6.